Reading from the N-terminus, the 1679-residue chain is Protein MLP2 (1679 aa).

Coiled coils occupy residues 32-176 (AKFE…KYDT), 233-466 (YNKF…RQVK), 516-1064 (FSNV…EREL), and 1099-1491 (KLVS…ENAG). Short sequence motifs (bipartite nuclear localization signal) lie at residues 417-433 (KRST…KRKQ), 639-655 (RKEL…KKTT), and 1433-1449 (KKEW…RRIK). Disordered regions lie at residues 1495 to 1521 (FLDN…SERP) and 1632 to 1679 (DLTN…ASNE). Polar residues-rich tracts occupy residues 1511-1520 (NSPSKGNSER) and 1646-1661 (IGST…TSSD). The residue at position 1512 (Ser-1512) is a Phosphoserine. Residues 1662-1671 (PDTKKVKESP) show a composition bias toward basic and acidic residues. At Ser-1670 the chain carries Phosphoserine.

Component of the nuclear complex (NPC). NPC constitutes the exclusive means of nucleocytoplasmic transport. NPCs allow the passive diffusion of ions and small molecules and the active, nuclear transport receptor-mediated bidirectional transport of macromolecules such as proteins, RNAs, ribonucleoparticles (RNPs), and ribosomal subunits across the nuclear envelope. Due to its 8-fold rotational symmetry, all subunits are present with 8 copies or multiples thereof. Interacts with NUP60 and NIC96, which tether it to the nuclear pore complex. Component of the spindle pole body core in which it interacts directly with SPC110, SPC42 and SPC29. Also interacts with YKU70 (HDF1) and MLP1.

The protein localises to the nucleus. Its subcellular location is the cytoplasm. It is found in the cytoskeleton. The protein resides in the microtubule organizing center. It localises to the spindle pole body. The protein localises to the nuclear pore complex. Together with the closely related MLP1, involved in the structural and functional organization of perinuclear chromatin. MLP1/MLP2 associate with the nuclear pore complex and form filamentous structures along the nuclear periphery. Has a role in the localization of Esc1 to nucleolar regions. Together with MLP1, mediates tethering of the some telomeres to the nuclear periphery, probably mediated by YKU70/YKU80 (HDF1/HDF2) heterodimer and show perinuclear location dependent silencing. MLP1 and MLP2 are involved in telomere length regulation but not silencing or telomere anchoring. Plays a role in the incorporation of components into the spindle pole body. Involved in double-strand break repair, probably also mediated by the YKU70/YKU80 (HDF1/HDF2) heterodimer. The protein is Protein MLP2 (MLP2) of Saccharomyces cerevisiae (strain ATCC 204508 / S288c) (Baker's yeast).